We begin with the raw amino-acid sequence, 324 residues long: Lipoyl synthase, chloroplastic (324 aa).

Composition is skewed to low complexity over residues 1–12 (MCGPTATTVANA) and 20–29 (KGLPPGLKKP). Residues 1-30 (MCGPTATTVANAGTGGETIKGLPPGLKKPP) form a disordered region. The [4Fe-4S] cluster site is built by Cys-58, Cys-63, Cys-69, Cys-86, Cys-90, Cys-93, and Ser-302. The Radical SAM core domain maps to 72 to 291 (GDTGTATVML…AYGEEVIGFR (220 aa)).

Belongs to the radical SAM superfamily. Lipoyl synthase family. [4Fe-4S] cluster serves as cofactor.

It is found in the plastid. It localises to the chloroplast. The catalysed reaction is [[Fe-S] cluster scaffold protein carrying a second [4Fe-4S](2+) cluster] + N(6)-octanoyl-L-lysyl-[protein] + 2 oxidized [2Fe-2S]-[ferredoxin] + 2 S-adenosyl-L-methionine + 4 H(+) = [[Fe-S] cluster scaffold protein] + N(6)-[(R)-dihydrolipoyl]-L-lysyl-[protein] + 4 Fe(3+) + 2 hydrogen sulfide + 2 5'-deoxyadenosine + 2 L-methionine + 2 reduced [2Fe-2S]-[ferredoxin]. The protein operates within protein modification; protein lipoylation via endogenous pathway; protein N(6)-(lipoyl)lysine from octanoyl-[acyl-carrier-protein]: step 2/2. Its function is as follows. Catalyzes the radical-mediated insertion of two sulfur atoms into the C-6 and C-8 positions of the octanoyl moiety bound to the lipoyl domains of lipoate-dependent enzymes, thereby converting the octanoylated domains into lipoylated derivatives. This is Lipoyl synthase, chloroplastic from Ostreococcus lucimarinus (strain CCE9901).